A 168-amino-acid polypeptide reads, in one-letter code: G/U mismatch-specific DNA glycosylase (168 aa).

The protein belongs to the uracil-DNA glycosylase (UDG) superfamily. TDG/mug family. As to quaternary structure, binds DNA as a monomer.

It is found in the cytoplasm. The catalysed reaction is Specifically hydrolyzes mismatched double-stranded DNA and polynucleotides, releasing free uracil.. In terms of biological role, excises ethenocytosine and uracil, which can arise by alkylation or deamination of cytosine, respectively, from the corresponding mispairs with guanine in ds-DNA. It is capable of hydrolyzing the carbon-nitrogen bond between the sugar-phosphate backbone of the DNA and the mispaired base. The complementary strand guanine functions in substrate recognition. Required for DNA damage lesion repair in stationary-phase cells. This Cronobacter sakazakii (strain ATCC BAA-894) (Enterobacter sakazakii) protein is G/U mismatch-specific DNA glycosylase.